A 629-amino-acid polypeptide reads, in one-letter code: tRNA uridine 5-carboxymethylaminomethyl modification enzyme MnmG (629 aa).

Residues 13–18 (GGGHAG), Val125, and Ser180 contribute to the FAD site. 273–287 (GPRYCPSIEDKVMRF) contacts NAD(+). Residue Gln370 participates in FAD binding.

Belongs to the MnmG family. Homodimer. Heterotetramer of two MnmE and two MnmG subunits. FAD serves as cofactor.

The protein localises to the cytoplasm. Its function is as follows. NAD-binding protein involved in the addition of a carboxymethylaminomethyl (cmnm) group at the wobble position (U34) of certain tRNAs, forming tRNA-cmnm(5)s(2)U34. The sequence is that of tRNA uridine 5-carboxymethylaminomethyl modification enzyme MnmG from Citrobacter koseri (strain ATCC BAA-895 / CDC 4225-83 / SGSC4696).